The sequence spans 828 residues: Neurotrophin receptor-interacting factor 1 (828 aa).

The KRAB 1 domain occupies 14-85 (VKFEDVSLTF…QREIPQDTLP (72 aa)). A Glycyl lysine isopeptide (Lys-Gly) (interchain with G-Cter in ubiquitin) cross-link involves residue lysine 15. In terms of domain architecture, SCAN box spans 158 to 240 (RQKFRHFQYE…ALLENMTSVS (83 aa)). One can recognise a KRAB 2 domain in the interval 280 to 370 (VTFQDVAVDF…ESILEDGVKE (91 aa)). Disordered regions lie at residues 328-355 (RELTPDSPIPVVKPIHDPNTNDLSRNGT), 377-490 (NQVG…DPIT), and 575-611 (QKGYKEGNVQGNRNSWKHIKPHQKGSKGERVEELSTS). Polar residues predominate over residues 345 to 355 (PNTNDLSRNGT). Positions 384–394 (EKGHPQKKFSE) are enriched in basic and acidic residues. Positions 418–433 (KYVKVKQKGTGKRKGR) are enriched in basic residues. Residues 458-478 (RSGSTPVTHGSSIKKQQQGSE) are compositionally biased toward polar residues. Residues 589–599 (SWKHIKPHQKG) are compositionally biased toward basic residues. Basic and acidic residues predominate over residues 600–611 (SKGERVEELSTS). 5 consecutive C2H2-type zinc fingers follow at residues 684–706 (CRCSECGKLFRNARYFSVHKKIH), 712–734 (YMCMACGKAFVQSSSLTQHLRIH), 740–762 (FECSECGRTFNDRSAISQHLRTH), 768–790 (YHCERCGKAFRQSSHLTRHERTH), and 796–818 (YVCIKCGKAFTQSSHLIGHQKTH).

The protein belongs to the krueppel C2H2-type zinc-finger protein family. Interacts with NGFR/p75(NTR). Interacts (via KRAB 1 domain) with TRAF6. Interacts (when ubiquitinated at Lys-15) with SQSTM1/p62. In terms of processing, ubiquitinated by TRAF6 at Lys-15 through 'Lys-63'-linked polyubiquitination. 'Lys-63'-linked polyubiquitination occurs in response to NGFR/p75(NTR) cleavage by gamma-secretase and promotes binding with the ICD cleavage product of NGFR/p75(NTR), followed by translocation into the nucleus and subsequent apoptosis. Ubiquitously expressed at low level. Expressed at higher level in testis.

The protein localises to the cytoplasm. It localises to the nucleus. Functionally, transcription regulator involved in NGFR/p75(NTR)-mediated apoptosis. Essential component of the NGFR/p75(NTR) apoptotic pathway: upon ligand-binding and subsequent cleavage of NGFR/p75(NTR), binds to the intracellular domain (ICD) cleavage product of NGFR/p75(NTR), translocates to the nucleus and induces apoptosis, possibly by regulating expression of key regulators of apoptosis. Induces NGFR/p75(NTR)-mediated apoptosis in retina and sympathetic neurons. May also regulate expression of neuronal cholesterol biosynthesis genes. Probably acts as a transcription repressor: specifically binds to the 3'-end of zinc-finger coding genes and recruiting chromatin-modifying proteins such as SETDB1 and TRIM28/KAP1, leading to transcription repression. The chain is Neurotrophin receptor-interacting factor 1 (Nrif1) from Mus musculus (Mouse).